A 459-amino-acid polypeptide reads, in one-letter code: Probable 1,4-beta-D-glucan cellobiohydrolase C (459 aa).

An N-terminal signal peptide occupies residues 1–18; the sequence is MHYPLSLALAFLPFGIQA. Residues 19–54 enclose the CBM1 domain; it reads QQTLWGQCGGQGYSGATSCVAGATCATVNEYYAQCT. Cystine bridges form between Cys26–Cys43 and Cys37–Cys53. The segment at 54 to 94 is thr-rich linker; it reads TPAAGTSSATTLKTTTSSTTAAVTTTTTTQSPTGSASPTTT. The tract at residues 76–97 is disordered; sequence VTTTTTTQSPTGSASPTTTASA. The catalytic stretch occupies residues 95–459; it reads ASASGNPFSG…QLLTNANPAF (365 aa). Asp189 is a catalytic residue. Cys190 and Cys249 are joined by a disulfide. Catalysis depends on Asp235, which acts as the Proton donor. Asn303 carries an N-linked (GlcNAc...) asparagine glycan. The cysteines at positions 381 and 428 are disulfide-linked. Asp414 acts as the Nucleophile in catalysis.

Belongs to the glycosyl hydrolase 6 (cellulase B) family.

The protein resides in the secreted. The catalysed reaction is Hydrolysis of (1-&gt;4)-beta-D-glucosidic linkages in cellulose and cellotetraose, releasing cellobiose from the non-reducing ends of the chains.. Its function is as follows. The biological conversion of cellulose to glucose generally requires three types of hydrolytic enzymes: (1) Endoglucanases which cut internal beta-1,4-glucosidic bonds; (2) Exocellobiohydrolases that cut the disaccharide cellobiose from the non-reducing end of the cellulose polymer chain; (3) Beta-1,4-glucosidases which hydrolyze the cellobiose and other short cello-oligosaccharides to glucose. This chain is Probable 1,4-beta-D-glucan cellobiohydrolase C (cbhC), found in Aspergillus niger (strain ATCC MYA-4892 / CBS 513.88 / FGSC A1513).